The sequence spans 252 residues: tRNA (guanine-N(7)-)-methyltransferase (252 aa).

4 residues coordinate S-adenosyl-L-methionine: E80, E105, D132, and D155. D155 is an active-site residue. Residues K159, D191, and 231–234 (TKFE) contribute to the substrate site.

It belongs to the class I-like SAM-binding methyltransferase superfamily. TrmB family.

The enzyme catalyses guanosine(46) in tRNA + S-adenosyl-L-methionine = N(7)-methylguanosine(46) in tRNA + S-adenosyl-L-homocysteine. Its pathway is tRNA modification; N(7)-methylguanine-tRNA biosynthesis. Its function is as follows. Catalyzes the formation of N(7)-methylguanine at position 46 (m7G46) in tRNA. The chain is tRNA (guanine-N(7)-)-methyltransferase from Actinobacillus succinogenes (strain ATCC 55618 / DSM 22257 / CCUG 43843 / 130Z).